The primary structure comprises 478 residues: Alpha-(1,3)-fucosyltransferase FucT (478 aa).

Substrate-binding positions include Gly-94, 186–189 (VASN), Arg-195, 222–225 (VKNK), Asn-240, and 246–250 (YVTEK). The interval 347-353 (DNPFIFC) is important for acceptor specificity. A run of 10 repeats spans residues 364 to 370 (DDLRVNY), 371 to 377 (DDLRVNY), 378 to 384 (DDLRINY), 385 to 391 (DDLRVNY), 392 to 398 (DDLRINY), 399 to 405 (DDLRVNY), 406 to 412 (DDLRVNY), 413 to 419 (DDLRINY), 420 to 426 (DDLRVNY), and 427 to 433 (DDLRVNY). Positions 364-433 (DDLRVNYDDL…VNYDDLRVNY (70 aa)) are 10 X 7 AA tandem repeat of D-D-L-R-[IV]-N-Y. The may be involved in membrane binding stretch occupies residues 434 to 478 (ERLLSKATPLLELSQNTTSKIYRKAYQKSLPLLRAIRRWVKKLGL).

It belongs to the glycosyltransferase 10 family. As to quaternary structure, homodimer.

Its subcellular location is the membrane. The protein localises to the cytoplasm. It carries out the reaction a beta-D-galactosyl-(1-&gt;4)-N-acetyl-beta-D-glucosaminyl derivative + GDP-beta-L-fucose = a beta-D-galactosyl-(1-&gt;4)-[alpha-L-fucosyl-(1-&gt;3)]-N-acetyl-beta-D-glucosaminyl derivative + GDP + H(+). Its pathway is lipopolysaccharide biosynthesis; LPS oligosaccharide biosynthesis. Involved in the biosynthesis of the Lewis X (LeX) trisaccharide of the lipopolysaccharide (LPS) O-antigen. Catalyzes the addition of fucose in alpha 1-3 linkage to Gal-beta-1-4-GlcNAc-beta-O-R (LacNAc-R) type II acceptor. This Helicobacter pylori (Campylobacter pylori) protein is Alpha-(1,3)-fucosyltransferase FucT.